Consider the following 328-residue polypeptide: Gonadotropin-releasing hormone receptor (328 aa).

The Extracellular portion of the chain corresponds to 1–38 (MANGDSPDQNENHCSAINSSILLTPGSLPTLTLSGKIR). Asn18 carries an N-linked (GlcNAc...) asparagine glycan. A helical membrane pass occupies residues 39-58 (VTVTFFLFLLSTIFNTSFLL). Residues 59 to 77 (KLQNWTQRKEKRKKLSKMK) are Cytoplasmic-facing. The helical transmembrane segment at 78–97 (VLLKHLTLANLLETLIVMPL) threads the bilayer. Residues 98-115 (DGMWNITVQWYAGELLCK) are Extracellular-facing. Asn102 carries an N-linked (GlcNAc...) asparagine glycan. An intrachain disulfide couples Cys114 to Cys196. The chain crosses the membrane as a helical span at residues 116 to 137 (VLSYLKLFSMYAPAFMMVVISL). At 138–164 (DRSLAITRPLAVKSNSKLGQFMIGLAW) the chain is on the cytoplasmic side. Residues 165–184 (LLSSIFAGPQLYIFGMIHLA) form a helical membrane-spanning segment. The Extracellular segment spans residues 185 to 212 (DDSGQTEGFSQCVTHCSFPQWWHQAFYN). The helical transmembrane segment at 213–232 (FFTFSCLFIIPLLIMLICNA) threads the bilayer. Residues 233-281 (KIIFTLTRVLHQDPHKLQLNQSKNNIPQARLRTLKMTVAFATSFTVCWT) lie on the Cytoplasmic side of the membrane. A helical membrane pass occupies residues 282-300 (PYYVLGIWYWFDPDMVNRV). Topologically, residues 301-306 (SDPVNH) are extracellular. The helical transmembrane segment at 307–326 (FFFLFAFLNPCFDPLIYGYF) threads the bilayer. Over 327–328 (SL) the chain is Cytoplasmic.

This sequence belongs to the G-protein coupled receptor 1 family.

The protein localises to the cell membrane. Functionally, receptor for gonadotropin releasing hormone (GnRH) that mediates the action of GnRH to stimulate the secretion of the gonadotropic hormones luteinizing hormone (LH) and follicle-stimulating hormone (FSH). This receptor mediates its action by association with G-proteins that activate a phosphatidylinositol-calcium second messenger system. In Ovis aries (Sheep), this protein is Gonadotropin-releasing hormone receptor (GNRHR).